A 381-amino-acid chain; its full sequence is MGDRERNKKRLLELLRAPDTGNAHCADCGAADPDWASYKLGIFICLNCCGVHRNFPDISRVKSVRLDFWDDSIVEFMIHNGNLRVKAKFEARVPAFYYIPQANDCLVLKEQWIRAKYERREFMADGETISLPGNREGFLWKRGRDNSQFLRRKFVLLAREGLLKYFTKEQGKSPKAVISIKDLNATFQTEKIGHPHGLQITYRRDGHTRNLFVYHESGKEIVDWFNALRAARLQYLKMAFPELPESELVPFLTRNYLKQGFMEKTGPKQKEPFKKRWFALDCHERRLLYYKNPLDAFEQGQVFLGNKEQGYEAYEDLPKGIRGNRWKAGLTIVTPERRFVLTCPSEKEQQEWLESLRGVLSSPLTPLNRLTASTESGRSSR.

The region spanning 9-131 (KRLLELLRAP…FMADGETISL (123 aa)) is the Arf-GAP domain. The C4-type zinc-finger motif lies at 25-48 (CADCGAADPDWASYKLGIFICLNC). 2 PH domains span residues 132 to 233 (PGNR…AARL) and 255 to 361 (NYLK…GVLS).

Highly expressed in placenta, spleen, kidney, skeletal muscle and adrenal gland. Weakly expressed in thyroid, liver, heart, lung, small intestine, peripheral blood leukocytes. Not detected in spinal cord, brain, stomach, trachea, colon, lymph node and bone marrow.

Its subcellular location is the cytoplasm. It is found in the cell membrane. In terms of biological role, GTPase-activating protein for the ADP ribosylation factor family (Potential). Binds phosphatidylinositol 3,4,5-trisphosphate (PtdInsP3) and inositol 1,3,4,5-tetrakisphosphate (InsP4). Possesses a stoichiometry of two binding sites for InsP4 with identical affinity. This Homo sapiens (Human) protein is Arf-GAP with dual PH domain-containing protein 2 (ADAP2).